Reading from the N-terminus, the 318-residue chain is Homoserine kinase (318 aa).

ATP is bound at residue 97–107; sequence PIGSGLGSSAC.

It belongs to the GHMP kinase family. Homoserine kinase subfamily.

It localises to the cytoplasm. The enzyme catalyses L-homoserine + ATP = O-phospho-L-homoserine + ADP + H(+). It participates in amino-acid biosynthesis; L-threonine biosynthesis; L-threonine from L-aspartate: step 4/5. Its function is as follows. Catalyzes the ATP-dependent phosphorylation of L-homoserine to L-homoserine phosphate. The chain is Homoserine kinase from Vibrio atlanticus (strain LGP32) (Vibrio splendidus (strain Mel32)).